Here is a 365-residue protein sequence, read N- to C-terminus: Mitogen-activated protein kinase p38b (365 aa).

One can recognise a Protein kinase domain in the interval 24–311 (YQNLQPVGQG…AEQALAHPYM (288 aa)). Residues 30–38 (VGQGAYGQV) and Lys-53 contribute to the ATP site. Asp-153 functions as the Proton acceptor in the catalytic mechanism. At Thr-183 the chain carries Phosphothreonine. Positions 183–185 (TGY) match the TXY motif. Tyr-185 carries the post-translational modification Phosphotyrosine.

This sequence belongs to the protein kinase superfamily. CMGC Ser/Thr protein kinase family. MAP kinase subfamily. Mg(2+) is required as a cofactor. Post-translationally, dually phosphorylated on Thr-183 and Tyr-185, which activates the enzyme. In terms of tissue distribution, at mid-embryogenesis, highest expression is seen in developing anterior and posterior midguts. Almost ubiquitous expression throughout all development.

The protein localises to the nucleus. It catalyses the reaction L-seryl-[protein] + ATP = O-phospho-L-seryl-[protein] + ADP + H(+). The enzyme catalyses L-threonyl-[protein] + ATP = O-phospho-L-threonyl-[protein] + ADP + H(+). Its activity is regulated as follows. Activated by threonine and tyrosine phosphorylation by Mkk3. Functionally, kinase involved in dpp signal transduction pathway in the process of wing morphogenesis when the levels of dpp are enhanced or inhibited. May down-regulate insect immunity gene expression after prolonged infection. This chain is Mitogen-activated protein kinase p38b, found in Drosophila melanogaster (Fruit fly).